Here is a 164-residue protein sequence, read N- to C-terminus: Histone H1 (164 aa).

A compositionally biased stretch (polar residues) spans 1-10; the sequence is MAPRSSTSKS. The interval 1–164 is disordered; that stretch reads MAPRSSTSKS…KKSSKPAKKN (164 aa). Over residues 16-27 the composition is skewed to basic residues; that stretch reads KDHKKAPIKKAI. A phosphothreonine mark is found at T47 and T54. Basic and acidic residues-rich tracts occupy residues 49-61, 69-89, and 117-156; these read VKKD…ADTK, TMKE…GDKK, and TKKE…DAKK.

Post-translationally, cell-growth/division-associated phosphorylation by a CDC2-like kinase.

Its subcellular location is the nucleus. The protein localises to the chromosome. Its function is as follows. Histones H1 are necessary for the condensation of nucleosome chains into higher-order structures. The protein is Histone H1 (HHO) of Tetrahymena thermophila (strain SB210).